The chain runs to 640 residues: Threonine--tRNA ligase (640 aa).

The 61-residue stretch at 1–61 (MPVITLPDGS…SNDATLQIIT (61 aa)) folds into the TGS domain. The catalytic stretch occupies residues 242-533 (DHRKIGKQLD…LIEHYAGVFP (292 aa)). Zn(2+)-binding residues include Cys333, His384, and His510.

It belongs to the class-II aminoacyl-tRNA synthetase family. Homodimer. Zn(2+) is required as a cofactor.

Its subcellular location is the cytoplasm. The catalysed reaction is tRNA(Thr) + L-threonine + ATP = L-threonyl-tRNA(Thr) + AMP + diphosphate + H(+). Functionally, catalyzes the attachment of threonine to tRNA(Thr) in a two-step reaction: L-threonine is first activated by ATP to form Thr-AMP and then transferred to the acceptor end of tRNA(Thr). Also edits incorrectly charged L-seryl-tRNA(Thr). The protein is Threonine--tRNA ligase of Pseudomonas putida (strain ATCC 700007 / DSM 6899 / JCM 31910 / BCRC 17059 / LMG 24140 / F1).